The following is an 82-amino-acid chain: uncharacterized protein (82 aa).

2 helical membrane-spanning segments follow: residues 8-28 (LTTA…LPAP) and 50-70 (LYTL…YFVL).

It localises to the cell membrane. This is an uncharacterized protein from Escherichia coli (strain K12).